The sequence spans 505 residues: tRNA-2-methylthio-N(6)-dimethylallyladenosine synthase (505 aa).

The 119-residue stretch at 14–132 (RTYEVRTYGC…LPVLLERARV (119 aa)) folds into the MTTase N-terminal domain. Positions 23, 61, 95, 169, 173, and 176 each coordinate [4Fe-4S] cluster. One can recognise a Radical SAM core domain in the interval 155-386 (RESAYAAWVS…ALQEEISWDE (232 aa)). Residues 388–456 (KKQVGRTLEL…PHHLLAEGAV (69 aa)) form the TRAM domain.

Belongs to the methylthiotransferase family. MiaB subfamily. As to quaternary structure, monomer. Requires [4Fe-4S] cluster as cofactor.

The protein resides in the cytoplasm. The enzyme catalyses N(6)-dimethylallyladenosine(37) in tRNA + (sulfur carrier)-SH + AH2 + 2 S-adenosyl-L-methionine = 2-methylsulfanyl-N(6)-dimethylallyladenosine(37) in tRNA + (sulfur carrier)-H + 5'-deoxyadenosine + L-methionine + A + S-adenosyl-L-homocysteine + 2 H(+). Functionally, catalyzes the methylthiolation of N6-(dimethylallyl)adenosine (i(6)A), leading to the formation of 2-methylthio-N6-(dimethylallyl)adenosine (ms(2)i(6)A) at position 37 in tRNAs that read codons beginning with uridine. The chain is tRNA-2-methylthio-N(6)-dimethylallyladenosine synthase from Streptomyces coelicolor (strain ATCC BAA-471 / A3(2) / M145).